The following is a 211-amino-acid chain: Uridine kinase (211 aa).

An ATP-binding site is contributed by 12 to 19 (GGSGSGKT).

Belongs to the uridine kinase family.

Its subcellular location is the cytoplasm. It carries out the reaction uridine + ATP = UMP + ADP + H(+). The catalysed reaction is cytidine + ATP = CMP + ADP + H(+). It participates in pyrimidine metabolism; CTP biosynthesis via salvage pathway; CTP from cytidine: step 1/3. Its pathway is pyrimidine metabolism; UMP biosynthesis via salvage pathway; UMP from uridine: step 1/1. The sequence is that of Uridine kinase from Anoxybacillus flavithermus (strain DSM 21510 / WK1).